The sequence spans 495 residues: Ectonucleoside triphosphate diphosphohydrolase 8 (495 aa).

The Cytoplasmic portion of the chain corresponds to 1 to 8 (MGLTWKQR). The helical transmembrane segment at 9–29 (VFTALLGAAAVSGLTALLLVL) threads the bilayer. Over 30-466 (VGTMNVLLPP…PAQGWAQSFG (437 aa)) the chain is Extracellular. Cysteine 78 and cysteine 102 form a disulfide bridge. Catalysis depends on glutamate 168, which acts as the Proton acceptor. An intrachain disulfide couples cysteine 246 to cysteine 292. Residues asparagine 303 and asparagine 324 are each glycosylated (N-linked (GlcNAc...) asparagine). 2 disulfides stabilise this stretch: cysteine 328-cysteine 334 and cysteine 380-cysteine 403. Residues 467-487 (VWAAGVVFVVLTLAATLGAVA) traverse the membrane as a helical segment. The Cytoplasmic portion of the chain corresponds to 488-495 (VQVFWLQD).

It belongs to the GDA1/CD39 NTPase family. Requires Ca(2+) as cofactor. The cofactor is Mg(2+). N-glycosylated.

Its subcellular location is the cell membrane. The enzyme catalyses a ribonucleoside 5'-triphosphate + 2 H2O = a ribonucleoside 5'-phosphate + 2 phosphate + 2 H(+). In terms of biological role, canalicular ectonucleoside NTPDase responsible for the main hepatic NTPDase activity. Ectonucleoside NTPDases catalyze the hydrolysis of gamma- and beta-phosphate residues of nucleotides, playing a central role in concentration of extracellular nucleotides. Has activity toward ATP, ADP, UTP and UDP, but not toward AMP. The sequence is that of Ectonucleoside triphosphate diphosphohydrolase 8 (ENTPD8) from Bos taurus (Bovine).